Reading from the N-terminus, the 384-residue chain is S-adenosylmethionine synthase (384 aa).

ATP is bound at residue His15. Asp17 contributes to the Mg(2+) binding site. Glu43 serves as a coordination point for K(+). Positions 56 and 99 each coordinate L-methionine. The flexible loop stretch occupies residues 99–109; that stretch reads QSADINQGVDR. Residues 164 to 166, 230 to 231, Asp239, 245 to 246, Ala262, and Lys266 each bind ATP; these read DAK, RF, and RK. Asp239 contacts L-methionine. Position 270 (Lys270) interacts with L-methionine.

Belongs to the AdoMet synthase family. As to quaternary structure, homotetramer; dimer of dimers. Mg(2+) is required as a cofactor. Requires K(+) as cofactor.

Its subcellular location is the cytoplasm. The enzyme catalyses L-methionine + ATP + H2O = S-adenosyl-L-methionine + phosphate + diphosphate. It participates in amino-acid biosynthesis; S-adenosyl-L-methionine biosynthesis; S-adenosyl-L-methionine from L-methionine: step 1/1. In terms of biological role, catalyzes the formation of S-adenosylmethionine (AdoMet) from methionine and ATP. The overall synthetic reaction is composed of two sequential steps, AdoMet formation and the subsequent tripolyphosphate hydrolysis which occurs prior to release of AdoMet from the enzyme. This chain is S-adenosylmethionine synthase, found in Haemophilus influenzae (strain ATCC 51907 / DSM 11121 / KW20 / Rd).